Reading from the N-terminus, the 268-residue chain is MKKRVRVPDLVRMKQQGEPIVALTAYDYTLARLVDAADVDLVLVGDSLGMVVQGHETTLPVTLDEMIYHTRAVARGCQRALVVLDMPFGSTQNGPERTFEQAARAMKESGAAAIKLEGGQAMAATVAYLTERAIPVIGHLGLTPQSVHAFGGFKIQGRDQAAAQRIADDALALQQAGAGAIILEGIPAALAQQVSQSLTIPTIGIGAGVGCDGQVLVIYDMLGLYGDLAPKFVKRYLDGVPVIGGAIGAYVQEVRNRQFPTPDHSFEK.

Residues Asp46 and Asp85 each coordinate Mg(2+). 3-methyl-2-oxobutanoate contacts are provided by residues 46–47 (DS), Asp85, and Lys115. Glu117 provides a ligand contact to Mg(2+). Glu184 (proton acceptor) is an active-site residue.

This sequence belongs to the PanB family. In terms of assembly, homodecamer; pentamer of dimers. Requires Mg(2+) as cofactor.

It is found in the cytoplasm. It catalyses the reaction 3-methyl-2-oxobutanoate + (6R)-5,10-methylene-5,6,7,8-tetrahydrofolate + H2O = 2-dehydropantoate + (6S)-5,6,7,8-tetrahydrofolate. It participates in cofactor biosynthesis; (R)-pantothenate biosynthesis; (R)-pantoate from 3-methyl-2-oxobutanoate: step 1/2. Its function is as follows. Catalyzes the reversible reaction in which hydroxymethyl group from 5,10-methylenetetrahydrofolate is transferred onto alpha-ketoisovalerate to form ketopantoate. The chain is 3-methyl-2-oxobutanoate hydroxymethyltransferase from Magnetococcus marinus (strain ATCC BAA-1437 / JCM 17883 / MC-1).